The primary structure comprises 240 residues: MGKRLISQNRGRGTPKYRSPTHKRKGAVKYRSYDEMEKDGKILGTVVDILHDPGRSAPVAKVRFANDEERLVLIPEGIQVGEEIECGISAEIKPGNVLPLGEIPEGIPVYNIETIPGDGGKLVRSGGCYAHVVSHDVGKTIVKLPSGFSKVLNPACRATVGVVAGGGRKEKPFVKAGKKHHSLSAKAIAWPKVRGVAMNAVDHPYGGGRHQHLGKPSSVSRHTSPGRKVGHIASRRTGRK.

A compositionally biased stretch (polar residues) spans methionine 1–glycine 11. Disordered stretches follow at residues methionine 1 to valine 28 and glycine 206 to lysine 240. Composition is skewed to basic residues over residues glycine 13–valine 28 and serine 224–lysine 240.

This sequence belongs to the universal ribosomal protein uL2 family. As to quaternary structure, part of the 50S ribosomal subunit. Forms a bridge to the 30S subunit in the 70S ribosome.

In terms of biological role, one of the primary rRNA binding proteins. Required for association of the 30S and 50S subunits to form the 70S ribosome, for tRNA binding and peptide bond formation. It has been suggested to have peptidyltransferase activity; this is somewhat controversial. Makes several contacts with the 16S rRNA in the 70S ribosome. The protein is Large ribosomal subunit protein uL2 of Methanococcus maripaludis (strain C7 / ATCC BAA-1331).